A 579-amino-acid chain; its full sequence is Glutamine--tRNA ligase (579 aa).

The short motif at 41–51 (PEPNGYLHIGH) is the 'HIGH' region element. ATP contacts are provided by residues 42–44 (EPN) and 48–54 (HIGHAKA). 2 residues coordinate L-glutamine: D74 and Y218. ATP is bound by residues T237, 285–286 (RL), and 293–295 (MSK). The 'KMSKS' region motif lies at 292–296 (VMSKR).

The protein belongs to the class-I aminoacyl-tRNA synthetase family. Monomer.

The protein localises to the cytoplasm. It catalyses the reaction tRNA(Gln) + L-glutamine + ATP = L-glutaminyl-tRNA(Gln) + AMP + diphosphate. This Xanthomonas oryzae pv. oryzae (strain MAFF 311018) protein is Glutamine--tRNA ligase.